We begin with the raw amino-acid sequence, 185 residues long: MISVNDFRTGLTIAVDNGLWQVLDFQHVKPGKGAAFVRSKLRNLRTGSVQEKTFRAGEKVEKAHIENRRMQYLYASGEAHVFMDNGTYEQIELGEKQIERELKFLKENMEVSIMTYQGEVLGVELPNTVELQVTETEPGIKGDTASNVTKPATLETGLVVQVPIFINEGETLIINTGEGKYVSRA.

Belongs to the elongation factor P family.

Its subcellular location is the cytoplasm. The protein operates within protein biosynthesis; polypeptide chain elongation. Functionally, involved in peptide bond synthesis. Stimulates efficient translation and peptide-bond synthesis on native or reconstituted 70S ribosomes in vitro. Probably functions indirectly by altering the affinity of the ribosome for aminoacyl-tRNA, thus increasing their reactivity as acceptors for peptidyl transferase. This is Elongation factor P from Bacillus cereus (strain 03BB102).